Here is a 961-residue protein sequence, read N- to C-terminus: Endochitinase A (961 aa).

The first 21 residues, 1-21 (MAPKLFTFVSALSGLASLASA), serve as a signal peptide directing secretion. Residues 28–339 (SNIAVYYGQG…EKIREILYDL (312 aa)) enclose the GH18 domain. The Proton donor role is filled by Glu175. Disordered regions lie at residues 338–720 (DLDP…TTTE), 767–787 (TDVPGSGSGSSPAQPTITADI), 813–842 (PPATTTEESTSAQPTGEVPSSDGSGSGEVS), and 912–933 (HVPVPSGSGSSPSGTQGGASPT). Residues 342–355 (NHPPPTTSPTPTPT) show a composition bias toward pro residues. Composition is skewed to low complexity over residues 356–510 (PSTT…STSS), 519–544 (SSTSVPATSSSVPSSAISPSSTPVIS), 552–604 (TSSS…PETT), and 612–635 (TPGSSVSTGTTSASTLSSSVPATS). Residues 636–665 (GGHTETSTVSTSSANQTPSASTSKPLIPTN) show a composition bias toward polar residues. Positions 666–720 (SASSTSTGSVTSTPSAPGVPSSSAGSDETATTSTTDSEPTSTSSGSVTAKPTTTE) are enriched in low complexity. The GPI-anchor amidated glycine moiety is linked to residue Gly936. A propeptide spans 937-961 (AGSRYDVVKGVPALVALALSLLAVL) (removed in mature form).

The protein belongs to the glycosyl hydrolase 18 family. Chitinase class III subfamily. In terms of processing, O-glycosylated but not N-glycosylated.

It localises to the cell membrane. It is found in the secreted. Its subcellular location is the cell wall. The protein localises to the cell tip. It catalyses the reaction Random endo-hydrolysis of N-acetyl-beta-D-glucosaminide (1-&gt;4)-beta-linkages in chitin and chitodextrins.. GPI-anchored chitinase involved in the degradation of chitin, a component of the cell walls of fungi and exoskeletal elements of some animals (including worms and arthropods). Required to reshape the cell wall at the sites where cell wall remodeling and/or cell wall maturation actively take place such as sites of conidia formation. This chain is Endochitinase A (chiA), found in Emericella nidulans (Aspergillus nidulans).